Consider the following 232-residue polypeptide: Large ribosomal subunit protein uL1 (232 aa).

It belongs to the universal ribosomal protein uL1 family. Part of the 50S ribosomal subunit.

Functionally, binds directly to 23S rRNA. The L1 stalk is quite mobile in the ribosome, and is involved in E site tRNA release. Protein L1 is also a translational repressor protein, it controls the translation of the L11 operon by binding to its mRNA. The chain is Large ribosomal subunit protein uL1 from Azorhizobium caulinodans (strain ATCC 43989 / DSM 5975 / JCM 20966 / LMG 6465 / NBRC 14845 / NCIMB 13405 / ORS 571).